Consider the following 385-residue polypeptide: Protein delta homolog 1 (385 aa).

An N-terminal signal peptide occupies residues 1–23; sequence MIATGALLRVLLLLLAFGHSTYG. EGF-like domains lie at 24 to 55, 53 to 86, 88 to 125, 127 to 168, 172 to 208, and 210 to 247; these read AECD…PLCD, LCDK…KFCE, DVRA…KDCQ, KAGP…NFCE, ATNS…KTCS, and PVSN…PTCA. The Extracellular segment spans residues 24–305; that stretch reads AECDPPCDPQ…KSTPLLTEGQ (282 aa). Cystine bridges form between Cys26/Cys37, Cys30/Cys43, Cys45/Cys54, Cys57/Cys68, Cys63/Cys74, Cys76/Cys85, Cys92/Cys103, Cys97/Cys113, Cys115/Cys124, Cys131/Cys144, Cys138/Cys156, and Cys158/Cys167. A glycan (O-linked (GalNAc...) serine) is linked at Ser94. The N-linked (GlcNAc...) asparagine glycan is linked to Asn100. Asn165 carries N-linked (GlcNAc...) asparagine; atypical; partial glycosylation. N-linked (GlcNAc...) asparagine; atypical glycosylation is present at Asn174. 6 disulfides stabilise this stretch: Cys176/Cys187, Cys181/Cys196, Cys198/Cys207, Cys214/Cys225, Cys219/Cys235, and Cys237/Cys246. An O-linked (GalNAc...) serine glycan is attached at Ser216. Thr224 carries O-linked (GalNAc...) threonine glycosylation. Residue Thr258 is glycosylated (O-linked (GalNAc...) threonine). Thr267 carries O-linked (GalNAc...) threonine; partial glycosylation. Thr271 is a glycosylation site (O-linked (GalNAc...) threonine). An N-linked (GlcNAc...) asparagine glycan is attached at Asn295. A helical membrane pass occupies residues 306-329; sequence AICFTILGVLTSLVVLGTVAIVFL. The Cytoplasmic segment spans residues 330–385; that stretch reads NKCETWVSNLRYNHTFRKKKNLLLQYNSGEELAVNIIFPEKIDMTTFNKEAGDEEI.

In terms of assembly, monomer. Interacts with SH3RF2. N- and O-glycosylated. As to expression, highly expressed in fetal liver, placenta, adult adrenal gland, brain, testis and ovary and, to a lesser degree, in adult kidney, muscle, thymus and heart.

It is found in the membrane. The protein resides in the cytoplasm. May have a role in neuroendocrine differentiation. Inhibits adipocyte differentiation. The protein is Protein delta homolog 1 (Dlk1) of Mus musculus (Mouse).